A 358-amino-acid polypeptide reads, in one-letter code: WD repeat-containing protein 53 (358 aa).

WD repeat units lie at residues 1–38 (MAVK…AWGE), 43–80 (LGHT…VLDV), 85–123 (DSLD…ILDL), 127–166 (KVIR…LWSL), 173–225 (WITN…RIFR), and 232–270 (EQEL…LWDA). The tract at residues 273–311 (EVEKKQKSPTKRTHRKKPKRGTCTKQGGNTNASVTDEEE) is disordered. A compositionally biased stretch (basic residues) spans 279–294 (KSPTKRTHRKKPKRGT). The span at 295–306 (CTKQGGNTNASV) shows a compositional bias: polar residues. The WD 7 repeat unit spans residues 314 to 355 (NILPKLNIEHGEKVNWLLGTKIKGHQNILVADQTSCISVYPL).

Belongs to the WD repeat WDR53 family.

This chain is WD repeat-containing protein 53 (WDR53), found in Homo sapiens (Human).